We begin with the raw amino-acid sequence, 239 residues long: 1-(5-phosphoribosyl)-5-[(5-phosphoribosylamino)methylideneamino] imidazole-4-carboxamide isomerase (239 aa).

Aspartate 8 serves as the catalytic Proton acceptor. Residue aspartate 129 is the Proton donor of the active site.

It belongs to the HisA/HisF family.

Its subcellular location is the cytoplasm. It carries out the reaction 1-(5-phospho-beta-D-ribosyl)-5-[(5-phospho-beta-D-ribosylamino)methylideneamino]imidazole-4-carboxamide = 5-[(5-phospho-1-deoxy-D-ribulos-1-ylimino)methylamino]-1-(5-phospho-beta-D-ribosyl)imidazole-4-carboxamide. It functions in the pathway amino-acid biosynthesis; L-histidine biosynthesis; L-histidine from 5-phospho-alpha-D-ribose 1-diphosphate: step 4/9. This chain is 1-(5-phosphoribosyl)-5-[(5-phosphoribosylamino)methylideneamino] imidazole-4-carboxamide isomerase, found in Bacillus cereus (strain ZK / E33L).